The following is a 440-amino-acid chain: MENIQKLIARYPLVEDLVALKETTWFNPGATSLAQGLPYVGLTEQDVNAAHDRLARFAPYLAKAFPQTAAAGGMIESDVVAIPAMQKRLEKEYGQTIDGEMLLKKDSHLAISGSIKARGGIYEVLTHAEKLALEAGLLTTDDDYSVLLSPEFKQFFSQYSIAVGSTGNLGLSIGIMSACIGFKVTVHMSADARAWKKAKLRSHGVTVVEYEDDYGVAVEQGRKAAQSDPNCFFIDDENSRTLFLGYAVAGQRLKAQFAQQGRVVDASHPLFVYLPCGVGGGPGGVAFGLKLAFGDNVHCFFAEPTHSPCMLLGVYTGLHDAISVQDIGIDNLTAADGLAVGRASGFVGRAMERLLDGLYTLDDQTMYDMLGWLAQEEGIRLEPSALAGMAGPQRICAAVAYQQRHGFSQTQLGNATHLVWATGGGMVPEDEMEQYLAKGR.

Lys-116 bears the N6-(pyridoxal phosphate)lysine mark.

This sequence belongs to the serine/threonine dehydratase family. DsdA subfamily. As to quaternary structure, monomer. Pyridoxal 5'-phosphate is required as a cofactor.

It carries out the reaction D-serine = pyruvate + NH4(+). The chain is D-serine dehydratase from Salmonella choleraesuis (strain SC-B67).